A 427-amino-acid polypeptide reads, in one-letter code: Enolase (427 aa).

Position 163 (glutamine 163) interacts with (2R)-2-phosphoglycerate. Glutamate 205 serves as the catalytic Proton donor. The Mg(2+) site is built by aspartate 242, glutamate 285, and aspartate 312. The (2R)-2-phosphoglycerate site is built by lysine 337, arginine 366, serine 367, and lysine 388. Lysine 337 functions as the Proton acceptor in the catalytic mechanism.

Belongs to the enolase family. The cofactor is Mg(2+).

Its subcellular location is the cytoplasm. The protein resides in the secreted. It localises to the cell surface. It catalyses the reaction (2R)-2-phosphoglycerate = phosphoenolpyruvate + H2O. The protein operates within carbohydrate degradation; glycolysis; pyruvate from D-glyceraldehyde 3-phosphate: step 4/5. In terms of biological role, catalyzes the reversible conversion of 2-phosphoglycerate (2-PG) into phosphoenolpyruvate (PEP). It is essential for the degradation of carbohydrates via glycolysis. The protein is Enolase of Rhodopseudomonas palustris (strain TIE-1).